A 61-amino-acid polypeptide reads, in one-letter code: Metallothionein-2D (61 aa).

Residue Met1 is modified to N-acetylmethionine. The interval Met1 to Cys29 is beta. A divalent metal cation is bound by residues Cys5, Cys7, Cys13, Cys15, Cys19, Cys21, Cys24, Cys26, Cys29, Cys33, Cys34, Cys36, Cys37, Cys41, Cys44, Cys48, Cys50, Cys57, Cys59, and Cys60. Residues Lys30–Ala61 form an alpha region.

This sequence belongs to the metallothionein superfamily. Type 1 family. In terms of assembly, monomer.

Metallothioneins have a high content of cysteine residues that bind various heavy metals; these proteins are transcriptionally regulated by both heavy metals and glucocorticoids. This Oryctolagus cuniculus (Rabbit) protein is Metallothionein-2D.